The sequence spans 689 residues: Glycine--tRNA ligase beta subunit (689 aa).

This sequence belongs to the class-II aminoacyl-tRNA synthetase family. Tetramer of two alpha and two beta subunits.

It localises to the cytoplasm. The enzyme catalyses tRNA(Gly) + glycine + ATP = glycyl-tRNA(Gly) + AMP + diphosphate. This Aeromonas hydrophila subsp. hydrophila (strain ATCC 7966 / DSM 30187 / BCRC 13018 / CCUG 14551 / JCM 1027 / KCTC 2358 / NCIMB 9240 / NCTC 8049) protein is Glycine--tRNA ligase beta subunit.